The sequence spans 843 residues: MGPQARTLHLLFLLLHALPKPVMLVGNSDFHLAGDYLLGGLFTLHANVKSVSHLSYLQVPKCNEYNMKVLGYNLMQAMRFAVEEINNCSSLLPGVLLGYEMVDVCYLSNNIQPGLYFLSQIDDFLPILKDYSQYRPQVVAVIGPDNSESAITVSNILSYFLVPQVTYSAITDKLRDKRRFPAMLRTVPSATHHIEAMVQLMVHFQWNWIVVLVSDDDYGRENSHLLSQRLTNTGDICIAFQEVLPVPEPNQAVRPEEQDQLDNILDKLRRTSARVVVIFSPELSLHNFFREVLRWNFTGFVWIASESWAIDPVLHNLTELRHTGTFLGVTIQRVSIPGFSQFRVRHDKPEYPMPNETSLRTTCNQDCDACMNITESFNNVLMLSGERVVYSVYSAVYAVAHTLHRLLHCNQVRCTKQIVYPWQLLREIWHVNFTLLGNQLFFDEQGDMPMLLDIIQWQWGLSQNPFQSIASYSPTETRLTYISNVSWYTPNNTVPISMCSKSCQPGQMKKPIGLHPCCFECVDCPPGTYLNRSVDEFNCLSCPGSMWSYKNNIACFKRRLAFLEWHEVPTIVVTILAALGFISTLAILLIFWRHFQTPMVRSAGGPMCFLMLVPLLLAFGMVPVYVGPPTVFSCFCRQAFFTVCFSVCLSCITVRSFQIVCVFKMARRLPSAYGFWMRYHGPYVFVAFITAVKVALVAGNMLATTINPIGRTDPDDPNIIILSCHPNYRNGLLFNTSMDLLLSVLGFSFAYVGKELPTNYNEAKFITLSMTFSFTSSISLCTFMSVHDGVLVTIMDLLVTVLNFLAIGLGYFGPKCYMILFYPERNTSAYFNSMIQGYTMRKS.

Residues 1-19 form the signal peptide; that stretch reads MGPQARTLHLLFLLLHALP. The Extracellular portion of the chain corresponds to 20 to 570; it reads KPVMLVGNSD…AFLEWHEVPT (551 aa). N-linked (GlcNAc...) asparagine glycosylation is found at asparagine 87, asparagine 296, asparagine 316, asparagine 355, asparagine 372, asparagine 432, asparagine 484, asparagine 491, and asparagine 531. Residues 571 to 591 traverse the membrane as a helical segment; it reads IVVTILAALGFISTLAILLIF. Residues 592-606 are Cytoplasmic-facing; it reads WRHFQTPMVRSAGGP. A helical transmembrane segment spans residues 607 to 627; the sequence is MCFLMLVPLLLAFGMVPVYVG. At 628–642 the chain is on the extracellular side; the sequence is PPTVFSCFCRQAFFT. Residues 643–663 form a helical membrane-spanning segment; the sequence is VCFSVCLSCITVRSFQIVCVF. The Cytoplasmic portion of the chain corresponds to 664–682; the sequence is KMARRLPSAYGFWMRYHGP. The chain crosses the membrane as a helical span at residues 683 to 703; that stretch reads YVFVAFITAVKVALVAGNMLA. The Extracellular segment spans residues 704 to 731; it reads TTINPIGRTDPDDPNIIILSCHPNYRNG. A helical transmembrane segment spans residues 732-752; it reads LLFNTSMDLLLSVLGFSFAYV. The Cytoplasmic segment spans residues 753 to 764; sequence GKELPTNYNEAK. A helical transmembrane segment spans residues 765–785; sequence FITLSMTFSFTSSISLCTFMS. Over 786 to 789 the chain is Extracellular; the sequence is VHDG. A helical membrane pass occupies residues 790 to 810; sequence VLVTIMDLLVTVLNFLAIGLG. Topologically, residues 811-843 are cytoplasmic; it reads YFGPKCYMILFYPERNTSAYFNSMIQGYTMRKS.

The protein belongs to the G-protein coupled receptor 3 family. TAS1R subfamily. In terms of assembly, forms heterodimers with TAS1R3. As to expression, expressed mainly in circumvallate and foliate taste papillae.

It is found in the cell membrane. Putative taste receptor. TAS1R2/TAS1R3 recognizes diverse natural and synthetic sweeteners. This is Taste receptor type 1 member 2 (Tas1r2) from Mus musculus (Mouse).